The sequence spans 560 residues: Trafficking protein particle complex II-specific subunit 65 (560 aa).

Positions 164–193 (SSKNTNNHLEKNNRATHRVSSKNSEVHEAD) are disordered. 2 positions are modified to phosphoserine: S393 and S398.

Part of the multisubunit TRAPP (transport protein particle) II complex composed of BET3, BET5, TRS20, TRS23, TRS31, TRS33, TRS65, TRS120 and TRS130. Interacts directly with TRS120 and TRS130.

Its subcellular location is the cytoplasm. It localises to the golgi apparatus. The protein localises to the cis-Golgi network. It participates in glycan metabolism; beta-glucan biosynthesis. In terms of biological role, specific subunit of the TRAPP II complex, a highly conserved vesicle tethering complex that functions in the late Golgi as a guanine nucleotide exchanger (GEF) for the Golgi YPT1 GTPase. TRS65 plays a role in the YPT GEF activity of TRAPP II in concert with the two other TRAPP II-specific subunits TRS120 and TRS130. Involved in cell wall (1--&gt;6)-beta-glucan synthesis. The protein is Trafficking protein particle complex II-specific subunit 65 (TRS65) of Saccharomyces cerevisiae (strain ATCC 204508 / S288c) (Baker's yeast).